We begin with the raw amino-acid sequence, 241 residues long: Carboxy-S-adenosyl-L-methionine synthase (241 aa).

Residues Tyr38, Gly63–Ser65, Asp88–Asn89, Asp116–Ile117, Asn131, and Arg198 each bind S-adenosyl-L-methionine.

The protein belongs to the class I-like SAM-binding methyltransferase superfamily. Cx-SAM synthase family. In terms of assembly, homodimer.

It carries out the reaction prephenate + S-adenosyl-L-methionine = carboxy-S-adenosyl-L-methionine + 3-phenylpyruvate + H2O. In terms of biological role, catalyzes the conversion of S-adenosyl-L-methionine (SAM) to carboxy-S-adenosyl-L-methionine (Cx-SAM). The polypeptide is Carboxy-S-adenosyl-L-methionine synthase (Actinobacillus pleuropneumoniae serotype 3 (strain JL03)).